Consider the following 278-residue polypeptide: Indole-3-glycerol phosphate synthase (278 aa).

This sequence belongs to the TrpC family.

The enzyme catalyses 1-(2-carboxyphenylamino)-1-deoxy-D-ribulose 5-phosphate + H(+) = (1S,2R)-1-C-(indol-3-yl)glycerol 3-phosphate + CO2 + H2O. It participates in amino-acid biosynthesis; L-tryptophan biosynthesis; L-tryptophan from chorismate: step 4/5. This is Indole-3-glycerol phosphate synthase from Stutzerimonas stutzeri (strain A1501) (Pseudomonas stutzeri).